The sequence spans 362 residues: Major capsid protein VP1 (362 aa).

The interval 1–21 (MAPTKRKGSCPGAAPKKPKEP) is disordered. A Bipartite nuclear localization signal motif is present at residues 5–19 (KRKGSCPGAAPKKPK). The tract at residues 302–362 (ISFLLSDLIN…EFGQTTTRMQ (61 aa)) is C-terminal arm. Thr338 is subject to Phosphothreonine; by host.

This sequence belongs to the polyomaviruses coat protein VP1 family. As to quaternary structure, homomultimer; disulfide-linked. The virus capsid is composed of 72 icosahedral units, each one composed of five disulfide-linked copies of VP1. Interacts with agnoprotein. Interacts with minor capsid proteins VP2 and VP3. Interacts with host HSPA8; this interaction probably participates in virus assembly. Interacts with host SP1; this interaction enhances the efficiency of viral packaging.

It is found in the virion. It localises to the host nucleus. The protein localises to the host endoplasmic reticulum. Its function is as follows. Forms an icosahedral capsid with a T=7 symmetry and a 40 nm diameter. The capsid is composed of 72 pentamers linked to each other by disulfide bonds and associated with VP2 or VP3 proteins. Binds to N-glycolylneuraminic analog of the ganglioside GM1 on the cell surface to provide virion attachment to target cell. Once attached, the virion is internalized by caveolin-mediated endocytosis and traffics to the endoplasmic reticulum. Inside the endoplasmic reticulum, the protein folding machinery isomerizes VP1 interpentamer disulfide bonds, thereby triggering initial uncoating. Next, the virion uses the endoplasmic reticulum-associated degradation machinery to probably translocate in the cytosol before reaching the nucleus. Nuclear entry of the viral DNA involves the selective exposure and importin recognition of VP2/Vp3 nuclear localization signal. The assembly takes place in the cell nucleus. Encapsulates the genomic DNA and participates in rearranging nucleosomes around the viral DNA. The viral progenies exit the cells by lytic release. The chain is Major capsid protein VP1 from Macaca (macaques).